The following is a 270-amino-acid chain: Methylthioribulose-1-phosphate dehydratase (270 aa).

Cys-122 is a binding site for substrate. Residues His-140 and His-142 each contribute to the Zn(2+) site. Catalysis depends on Glu-165, which acts as the Proton donor/acceptor. His-230 lines the Zn(2+) pocket.

The protein belongs to the aldolase class II family. MtnB subfamily. Zn(2+) is required as a cofactor.

The protein localises to the cytoplasm. The catalysed reaction is 5-(methylsulfanyl)-D-ribulose 1-phosphate = 5-methylsulfanyl-2,3-dioxopentyl phosphate + H2O. It functions in the pathway amino-acid biosynthesis; L-methionine biosynthesis via salvage pathway; L-methionine from S-methyl-5-thio-alpha-D-ribose 1-phosphate: step 2/6. In terms of biological role, catalyzes the dehydration of methylthioribulose-1-phosphate (MTRu-1-P) into 2,3-diketo-5-methylthiopentyl-1-phosphate (DK-MTP-1-P). In Candida albicans (strain WO-1) (Yeast), this protein is Methylthioribulose-1-phosphate dehydratase.